A 309-amino-acid polypeptide reads, in one-letter code: Ribosomal RNA small subunit methyltransferase H (309 aa).

S-adenosyl-L-methionine-binding positions include 41-43, Asp61, Phe85, Asp102, and Gln109; that span reads GGH.

This sequence belongs to the methyltransferase superfamily. RsmH family.

Its subcellular location is the cytoplasm. It catalyses the reaction cytidine(1402) in 16S rRNA + S-adenosyl-L-methionine = N(4)-methylcytidine(1402) in 16S rRNA + S-adenosyl-L-homocysteine + H(+). Functionally, specifically methylates the N4 position of cytidine in position 1402 (C1402) of 16S rRNA. The chain is Ribosomal RNA small subunit methyltransferase H from Albidiferax ferrireducens (strain ATCC BAA-621 / DSM 15236 / T118) (Rhodoferax ferrireducens).